The sequence spans 72 residues: Crustacean hyperglycemic hormone B (72 aa).

Q1 carries the post-translational modification Pyrrolidone carboxylic acid. A D-phenylalanine; in form CHHB-II modification is found at F3. 3 disulfide bridges follow: C7/C43, C23/C39, and C26/C52. V72 is subject to Valine amide.

Post-translationally, stereoinversion of L-Phe (in CHHB-I) to D-Phe (in CHHB-II).

Its subcellular location is the secreted. Hormone found in the sinus gland of isopods and decapods which controls the blood sugar level. Has a secretagogue action over the amylase released from the midgut gland. May act as a stress hormone and may be involved in the control of molting and reproduction. The sequence is that of Crustacean hyperglycemic hormone B from Cherax destructor (Common yabby crayfish).